The chain runs to 102 residues: MIHKLTSEERKTRLEGLPLWTAVPGRDAIQRSLRFADFNEAFGFMTRVAIKAQEMNHHPEWFNVYNRVDITLSTHDADGLTERDIELALFIDRAGAHAQPAA.

The protein belongs to the pterin-4-alpha-carbinolamine dehydratase family.

It catalyses the reaction (4aS,6R)-4a-hydroxy-L-erythro-5,6,7,8-tetrahydrobiopterin = (6R)-L-erythro-6,7-dihydrobiopterin + H2O. The chain is Putative pterin-4-alpha-carbinolamine dehydratase from Burkholderia lata (strain ATCC 17760 / DSM 23089 / LMG 22485 / NCIMB 9086 / R18194 / 383).